The primary structure comprises 1792 residues: Brefeldin A-inhibited guanine nucleotide-exchange protein 2 (1792 aa).

Methionine 1 is subject to N-acetylmethionine. The interval 2–224 is DCB; DCB:DCB domain and DCB:HUS domain interaction; that stretch reads QESQTKSMFV…KPQSPVIQAT (223 aa). A disordered region spans residues 207 to 294; that stretch reads ELEKPMQSKP…SRGTDSGAQE (88 aa). Phosphoserine is present on residues serine 214, serine 218, and serine 227. The segment covering 214 to 225 has biased composition (polar residues); sequence SKPQSPVIQATA. Residues 233-243 show a composition bias toward polar residues; that stretch reads LKQSQAQSKPT. Threonine 244 is subject to Phosphothreonine. Phosphoserine occurs at positions 355 and 356. Positions 515 to 535 are HUS; DCB:HUS domain interaction; the sequence is ADAQCVVDIYVNYDCDLNAAN. The residue at position 621 (serine 621) is a Phosphoserine. A Phosphothreonine modification is found at threonine 623. Serine 624 carries the phosphoserine modification. The residue at position 633 (threonine 633) is a Phosphothreonine. The SEC7 domain maps to 661 to 792; the sequence is FNKKPKRGIQ…IIMLTTDLHS (132 aa). 8 positions are modified to phosphoserine: serine 707, serine 1518, serine 1520, serine 1521, serine 1532, serine 1535, serine 1541, and serine 1789.

Homodimer. Interacts with ARFGEF1/BIG1; both proteins are probably part of the same or very similar macromolecular complexes. Interacts with PRKAR1A, PRKAR2A, PRKAR1B, PRKAR2B, PPP1CC, PDE3A, TNFRSF1A, MYCBP and EXOC7. Interacts with GABRB1, GABRB2 and GABRB3. In vitro phosphorylated by PKA reducing its GEF activity and dephosphorylated by phosphatase PP1.

The protein resides in the cytoplasm. It localises to the membrane. It is found in the golgi apparatus. The protein localises to the perinuclear region. Its subcellular location is the trans-Golgi network. The protein resides in the endosome. It localises to the cytoskeleton. It is found in the microtubule organizing center. The protein localises to the centrosome. Its subcellular location is the cell projection. The protein resides in the dendrite. It localises to the cytoplasmic vesicle. It is found in the synapse. With respect to regulation, inhibited by brefeldin A. Promotes guanine-nucleotide exchange on ARF1 and ARF3 and to a lower extent on ARF5 and ARF6. Promotes the activation of ARF1/ARF5/ARF6 through replacement of GDP with GTP. Involved in the regulation of Golgi vesicular transport. Required for the integrity of the endosomal compartment. Involved in trafficking from the trans-Golgi network (TGN) to endosomes and is required for membrane association of the AP-1 complex and GGA1. Seems to be involved in recycling of the transferrin receptor from recycling endosomes to the plasma membrane. Probably is involved in the exit of GABA(A) receptors from the endoplasmic reticulum. Involved in constitutive release of tumor necrosis factor receptor 1 via exosome-like vesicles; the function seems to involve PKA and specifically PRKAR2B. Proposed to act as A kinase-anchoring protein (AKAP) and may mediate crosstalk between Arf and PKA pathways. The sequence is that of Brefeldin A-inhibited guanine nucleotide-exchange protein 2 (Arfgef2) from Mus musculus (Mouse).